We begin with the raw amino-acid sequence, 396 residues long: Imidazolonepropionase (396 aa).

Fe(3+) contacts are provided by H69 and H71. The Zn(2+) site is built by H69 and H71. R78, Y136, and H163 together coordinate 4-imidazolone-5-propanoate. Residue Y136 coordinates N-formimidoyl-L-glutamate. A Fe(3+)-binding site is contributed by H224. Residue H224 coordinates Zn(2+). Position 227 (Q227) interacts with 4-imidazolone-5-propanoate. Residue D298 participates in Fe(3+) binding. D298 contributes to the Zn(2+) binding site. N-formimidoyl-L-glutamate contacts are provided by N300 and G302. Residue T303 coordinates 4-imidazolone-5-propanoate.

This sequence belongs to the metallo-dependent hydrolases superfamily. HutI family. Zn(2+) is required as a cofactor. The cofactor is Fe(3+).

It localises to the cytoplasm. The enzyme catalyses 4-imidazolone-5-propanoate + H2O = N-formimidoyl-L-glutamate. Its pathway is amino-acid degradation; L-histidine degradation into L-glutamate; N-formimidoyl-L-glutamate from L-histidine: step 3/3. In terms of biological role, catalyzes the hydrolytic cleavage of the carbon-nitrogen bond in imidazolone-5-propanoate to yield N-formimidoyl-L-glutamate. It is the third step in the universal histidine degradation pathway. The polypeptide is Imidazolonepropionase (Cutibacterium acnes (strain DSM 16379 / KPA171202) (Propionibacterium acnes)).